A 185-amino-acid polypeptide reads, in one-letter code: Probable chorismate pyruvate-lyase (185 aa).

Substrate contacts are provided by arginine 75, leucine 113, and glutamate 170.

It belongs to the UbiC family.

The protein resides in the cytoplasm. The catalysed reaction is chorismate = 4-hydroxybenzoate + pyruvate. Its pathway is cofactor biosynthesis; ubiquinone biosynthesis. Removes the pyruvyl group from chorismate, with concomitant aromatization of the ring, to provide 4-hydroxybenzoate (4HB) for the ubiquinone pathway. This chain is Probable chorismate pyruvate-lyase, found in Coxiella burnetii (strain RSA 493 / Nine Mile phase I).